Consider the following 219-residue polypeptide: tRNA (guanine-N(7)-)-methyltransferase (219 aa).

S-adenosyl-L-methionine is bound by residues E43, D68, E101, and N124. Substrate contacts are provided by K128 and D160.

It belongs to the class I-like SAM-binding methyltransferase superfamily. TrmB family.

The enzyme catalyses guanosine(46) in tRNA + S-adenosyl-L-methionine = N(7)-methylguanosine(46) in tRNA + S-adenosyl-L-homocysteine. It participates in tRNA modification; N(7)-methylguanine-tRNA biosynthesis. In terms of biological role, catalyzes the formation of N(7)-methylguanine at position 46 (m7G46) in tRNA. The sequence is that of tRNA (guanine-N(7)-)-methyltransferase from Clostridium botulinum (strain Eklund 17B / Type B).